The chain runs to 439 residues: Sequestosome-1 (439 aa).

Alanine 2 bears the N-acetylalanine mark. The segment at 2 to 48 (ASLTVKAYLLGKEEAAREIRRFSFCFSPEPEAEAAAGPGPCERLLSR) is interaction with LCK. One can recognise a PB1 domain in the interval 3-100 (SLTVKAYLLG…DIFRIYIKEK (98 aa)). Serine 24 carries the phosphoserine modification. An interaction with PRKCZ and dimerization region spans residues 41–105 (PCERLLSRVA…YIKEKKECRR (65 aa)). Residues 48 to 78 (RVAVLFPALRPGGFQAHYRDEDGDLVAFSSD) form an interaction with PAWR region. An interaction with GABRR3 region spans residues 119-221 (VHPNVICDGC…DGRPCPTAES (103 aa)). A ZZ-type zinc finger spans residues 120–170 (HPNVICDGCNGPVVGTRYKCSVCPDYDLCSVCEGKGLHREHSKLIFPNPFG). Residues cysteine 125, cysteine 128, cysteine 139, and cysteine 142 each contribute to the Zn(2+) site. Position 145 is a phosphotyrosine (tyrosine 145). Zn(2+) is bound by residues cysteine 148, cysteine 151, histidine 157, and histidine 160. The LIM protein-binding stretch occupies residues 167 to 217 (NPFGHLSDSFSHSRWLRKLKHGHFGWPGWEMGPPGNWSPRPPRAGDGRPCP). Phosphoserine occurs at positions 173, 175, and 204. The tract at residues 201–231 (GNWSPRPPRAGDGRPCPTAESASAPSEDPNV) is disordered. Residues 225-230 (PSEDPN) carry the TRAF6-binding motif. Phosphoserine is present on residues serine 246 and serine 263. Residues 259–389 (GGKRSRLTPT…ALYPHLPPEA (131 aa)) form a disordered region. Positions 265-292 (LTPTSAESSSTGTEDKSGTQPSSCSSEV) are enriched in polar residues. A Phosphothreonine modification is found at threonine 266. Residues 266-439 (TPTSAESSST…IQYSKHPPPL (174 aa)) are interaction with NTRK1. Residues serine 269 and serine 281 each carry the phosphoserine modification. Cysteine 288 carries S-palmitoyl cysteine lipidation. Residues serine 305, serine 327, and serine 331 each carry the phosphoserine modification. An MAP1LC3B-binding region spans residues 320 to 341 (QPEELMESDNCSGGDDDWTHLS). The LIR signature appears at 335–340 (DDWTHL). The span at 336 to 346 (DWTHLSSKEVD) shows a compositional bias: basic and acidic residues. An interaction with KEAP1 region spans residues 346–351 (DPSTGE). Phosphoserine is present on residues serine 348, serine 354, serine 360, serine 364, and serine 365. Polar residues predominate over residues 350–372 (GELQSLQMPESEGPSSLDPSQEG). The 46-residue stretch at 388–433 (EADPRLIESLSQMLSMGFSDEGGWLTRLLQTKNYDIGAALDTIQYS) folds into the UBA domain. Serine 402 bears the Phosphoserine; by ULK1 and TBK1 mark. A Phosphoserine modification is found at serine 406. 2 positions are modified to N6-acetyllysine; alternate: lysine 419 and lysine 434. Lysine 419 participates in a covalent cross-link: Glycyl lysine isopeptide (Lys-Gly) (interchain with G-Cter in ubiquitin); alternate. A Glycyl lysine isopeptide (Lys-Gly) (interchain with G-Cter in SUMO2); alternate cross-link involves residue lysine 434.

In terms of assembly, homooligomer or heterooligomer; may form homotypic arrays. Dimerization interferes with ubiquitin binding. Component of a ternary complex with PAWR and PRKCZ. Forms a complex with JUB/Ajuba, PRKCZ and TRAF6. Identified in a complex with TRAF6 and CYLD. Identified in a heterotrimeric complex with ubiquitin and ZFAND5, where ZFAND5 and SQSTM1 both interact with the same ubiquitin molecule. Interacts (via LIR motif) with MAP1LC3A and MAP1LC3B, as well as with other ATG8 family members, including GABARAP, GABARAPL1 and GABARAPL2; these interactions are necessary for the recruitment MAP1 LC3 family members to inclusion bodies containing polyubiquitinated protein aggregates and for their degradation by autophagy. Interacts directly with PRKCI and PRKCZ. Interacts with EBI3, LCK, RASA1, NR2F2, NTRK1, NTRK2, NTRK3, NBR1, MAP2K5 and MAPKAPK5. Upon TNF-alpha stimulation, interacts with RIPK1 probably bridging IKBKB to the TNF-R1 complex composed of TNF-R1/TNFRSF1A, TRADD and RIPK1. Interacts with the proteasome subunits PSMD4 and PSMC2. Interacts with TRAF6. Interacts with 'Lys-63'-linked polyubiquitinated MAPT/TAU. Interacts with FHOD3. Interacts with CYLD. Interacts with SESN1. Interacts with SESN2. Interacts with ULK1. Interacts with UBD. Interacts with WDR81; the interaction is direct and regulates the interaction of SQSTM1 with ubiquitinated proteins. Interacts with WDFY3; this interaction is required to recruit WDFY3 to cytoplasmic bodies and to PML bodies. Interacts with LRRC25. Interacts with STING1; leading to relocalization of STING1 to autophagosomes. Interacts (when phosphorylated at Ser-348) with KEAP1; the interaction is direct and inactivates the BCR(KEAP1) complex by sequestering KEAP1 in inclusion bodies, promoting its degradation. Interacts with MOAP1; promoting dissociation of SQSTM1 inclusion bodies that sequester KEAP1. Interacts with GBP1. Interacts with TAX1BP1. Interacts with (ubiquitinated) PEX5; specifically binds PEX5 ubiquitinated at 'Lys-209' in response to reactive oxygen species (ROS). Interacts (via PB1 domain) with TNS2; the interaction leads to sequestration of TNS2 in cytoplasmic aggregates with SQSTM1 and promotes TNS2 ubiquitination and proteasomal degradation. Interacts with IRS1; the interaction is disrupted by the presence of tensin TNS2. Interacts with TRIM5. Interacts with TRIM11 (when ubiquitinated); promoting AIM2 recruitment to autophagosomes and autophagy-dependent degradation of AIM2. Interacts with TRIM13. Interacts with TRIM16. Interacts with TRIM23. Interacts with TRIM50. Interacts with TRIM55. Interacts with ECSIT; this interaction inhibits TLR4 signaling via functional regulation of the TRAF6-ECSIT complex. Interacts with GABRR1, GABRR2 and GABRR3. Interacts with WDR83. Interacts with GRB2. Interacts with USP12; the interaction is independent of USP12 deubiquitinase activity and may be involved in regulation of autophagic flux. Interacts with ASB6. Phosphorylated. Phosphorylation at Ser-406 by ULK1 destabilizes the UBA dimer interface and increases binding affinity to ubiquitinated proteins. Phosphorylation at Ser-406 also primes for subsequent phosphorylation at Ser-402. Phosphorylation at Ser-402 by CK2 or ULK1 promotes binding to ubiquitinated proteins by increasing the affinity between the UBA domain and polyubiquitin chains. Phosphorylation at Ser-402 by ULK1 is stimulated by SESN2. Phosphorylated at Ser-402 by TBK1, leading to promote relocalization of 'Lys-63'-linked ubiquitinated STING1 to autophagosomes. Phosphorylation at Ser-348 by ULK1 promotes interaction with KEAP1 and inactivation of the BCR(KEAP1) complex, promoting NFE2L2/NRF2 nuclear accumulation and expression of phase II detoxifying enzymes. Phosphorylated in vitro by TTN. In terms of processing, ubiquitinated by UBE2J1 and RNF26 at Lys-434: ubiquitinated SQSTM1 attracts specific vesicle-associated adapters, forming a molecular bridge that restrains cognate vesicles in the perinuclear region and organizes the endosomal pathway for efficient cargo transport. Ubiquitination by UBE2D2 and UBE2D3 increases its ability to bind polyubiquitin chains by destabilizing the UBA dimer interface. Deubiquitination by USP15 releases target vesicles for fast transport into the cell periphery. Ubiquitinated by the BCR(KEAP1) complex at Lys-419, increasing SQSTM1 sequestering activity and promoting its degradation. Ubiquitinated via 'Lys-29' and 'Lys-33'-linked polyubiquitination leading to xenophagic targeting of bacteria and inhibition of their replication. Post-translationally, acetylated at Lys-419 and Lys-434 by KAT5/TIP60, promotes activity by destabilizing the UBA dimer interface and increases binding affinity to ubiquitinated proteins. Deacetylated by HDAC6. Palmitoylation at Cys-288 by ZDHHC19 is required for efficient autophagic degradation of SQSTM1-cargo complexes by promoting affinity for ATG8 proteins and recruitment of p62 bodies to autophagosomes. Dealmitoylated at Cys-288 by LYPLA1. As to expression, ubiquitously expressed. In brain, mainly expressed by neurons, especially pyramidal neurons in the cerebral cortex and hippocampus. Also expressed by Purkinje cells and neurons in the dentate nucleus of the cerebellum and neurons of the basal ganglia (at protein level).

The protein localises to the cytoplasmic vesicle. The protein resides in the autophagosome. It localises to the preautophagosomal structure. It is found in the cytoplasm. Its subcellular location is the cytosol. The protein localises to the nucleus. The protein resides in the PML body. It localises to the late endosome. It is found in the lysosome. Its subcellular location is the endoplasmic reticulum. The protein localises to the myofibril. The protein resides in the sarcomere. In terms of biological role, molecular adapter required for selective macroautophagy (aggrephagy) by acting as a bridge between polyubiquitinated proteins and autophagosomes. Promotes the recruitment of ubiquitinated cargo proteins to autophagosomes via multiple domains that bridge proteins and organelles in different steps. SQSTM1 first mediates the assembly and removal of ubiquitinated proteins by undergoing liquid-liquid phase separation upon binding to ubiquitinated proteins via its UBA domain, leading to the formation of insoluble cytoplasmic inclusions, known as p62 bodies. SQSTM1 then interacts with ATG8 family proteins on autophagosomes via its LIR motif, leading to p62 body recruitment to autophagosomes, followed by autophagic clearance of ubiquitinated proteins. SQSTM1 is itself degraded along with its ubiquitinated cargos. Also required to recruit ubiquitinated proteins to PML bodies in the nucleus. Also involved in autophagy of peroxisomes (pexophagy) in response to reactive oxygen species (ROS) by acting as a bridge between ubiquitinated PEX5 receptor and autophagosomes. Acts as an activator of the NFE2L2/NRF2 pathway via interaction with KEAP1: interaction inactivates the BCR(KEAP1) complex by sequestering the complex in inclusion bodies, promoting nuclear accumulation of NFE2L2/NRF2 and subsequent expression of cytoprotective genes. Promotes relocalization of 'Lys-63'-linked ubiquitinated STING1 to autophagosomes. Involved in endosome organization by retaining vesicles in the perinuclear cloud: following ubiquitination by RNF26, attracts specific vesicle-associated adapters, forming a molecular bridge that restrains cognate vesicles in the perinuclear region and organizes the endosomal pathway for efficient cargo transport. Sequesters tensin TNS2 into cytoplasmic puncta, promoting TNS2 ubiquitination and proteasomal degradation. May regulate the activation of NFKB1 by TNF-alpha, nerve growth factor (NGF) and interleukin-1. May play a role in titin/TTN downstream signaling in muscle cells. Adapter that mediates the interaction between TRAF6 and CYLD. Functionally, more potent than isoform 2 to stimulate PRKCZ-dependent phosphorylation of KCNAB2. This Rattus norvegicus (Rat) protein is Sequestosome-1 (Sqstm1).